The primary structure comprises 235 residues: Phosphoribosylformylglycinamidine synthase subunit PurQ (235 aa).

One can recognise a Glutamine amidotransferase type-1 domain in the interval 4 to 234 (GILVFPGTNC…VQHLTGRVIR (231 aa)). Cys86 serves as the catalytic Nucleophile. Catalysis depends on residues His203 and Glu205.

In terms of assembly, part of the FGAM synthase complex composed of 1 PurL, 1 PurQ and 2 PurS subunits.

It localises to the cytoplasm. The catalysed reaction is N(2)-formyl-N(1)-(5-phospho-beta-D-ribosyl)glycinamide + L-glutamine + ATP + H2O = 2-formamido-N(1)-(5-O-phospho-beta-D-ribosyl)acetamidine + L-glutamate + ADP + phosphate + H(+). It carries out the reaction L-glutamine + H2O = L-glutamate + NH4(+). It functions in the pathway purine metabolism; IMP biosynthesis via de novo pathway; 5-amino-1-(5-phospho-D-ribosyl)imidazole from N(2)-formyl-N(1)-(5-phospho-D-ribosyl)glycinamide: step 1/2. Part of the phosphoribosylformylglycinamidine synthase complex involved in the purines biosynthetic pathway. Catalyzes the ATP-dependent conversion of formylglycinamide ribonucleotide (FGAR) and glutamine to yield formylglycinamidine ribonucleotide (FGAM) and glutamate. The FGAM synthase complex is composed of three subunits. PurQ produces an ammonia molecule by converting glutamine to glutamate. PurL transfers the ammonia molecule to FGAR to form FGAM in an ATP-dependent manner. PurS interacts with PurQ and PurL and is thought to assist in the transfer of the ammonia molecule from PurQ to PurL. The chain is Phosphoribosylformylglycinamidine synthase subunit PurQ from Symbiobacterium thermophilum (strain DSM 24528 / JCM 14929 / IAM 14863 / T).